Reading from the N-terminus, the 242-residue chain is tRNA (guanine-N(1)-)-methyltransferase (242 aa).

Residues glycine 111 and isoleucine 130 to leucine 135 each bind S-adenosyl-L-methionine.

This sequence belongs to the RNA methyltransferase TrmD family. Homodimer.

Its subcellular location is the cytoplasm. The catalysed reaction is guanosine(37) in tRNA + S-adenosyl-L-methionine = N(1)-methylguanosine(37) in tRNA + S-adenosyl-L-homocysteine + H(+). Specifically methylates guanosine-37 in various tRNAs. The protein is tRNA (guanine-N(1)-)-methyltransferase of Onion yellows phytoplasma (strain OY-M).